Reading from the N-terminus, the 944-residue chain is Leucine--tRNA ligase 2 (944 aa).

Residues 36–46 (PYPNSPFHLGH) carry the 'HIGH' region motif. The 'KMSKS' region signature appears at 621–625 (KMSKS). Lysine 624 serves as a coordination point for ATP.

It belongs to the class-I aminoacyl-tRNA synthetase family.

It localises to the cytoplasm. It carries out the reaction tRNA(Leu) + L-leucine + ATP = L-leucyl-tRNA(Leu) + AMP + diphosphate. The polypeptide is Leucine--tRNA ligase 2 (Sulfurisphaera tokodaii (strain DSM 16993 / JCM 10545 / NBRC 100140 / 7) (Sulfolobus tokodaii)).